We begin with the raw amino-acid sequence, 311 residues long: MKKTNFLSFGCYLPKKVLTNFDLEELVDTSDEWILRRTGIKTRYIAEEEDVCELAFRASLNCLERAMHFSQKEVDAIIVATCTANKRLPAVANMLQARLGIGRHILSFDVNAACTGFLYALSIVDAMIVSGKVSTVLLVGAEAMSTIIDWNDRNTCVLFGDGAGAVLVSAGDSGGVLYEHMACDSSLGEALLAEVGGTLKMDGRSVFEAAIKRLTLAIGEALKTTGISVEELDYFIMHQANIRIIELIGEKIGIDRSKIIVTVDRYANTSAASIPITLAYMDSHGSIRKGAKILFAAMGAGFTYGVTIFEY.

Residues cysteine 114 and histidine 238 contribute to the active site. The ACP-binding stretch occupies residues 239–243; sequence QANIR. Residue asparagine 268 is part of the active site.

This sequence belongs to the thiolase-like superfamily. FabH family. As to quaternary structure, homodimer.

The protein localises to the cytoplasm. The enzyme catalyses malonyl-[ACP] + acetyl-CoA + H(+) = 3-oxobutanoyl-[ACP] + CO2 + CoA. It functions in the pathway lipid metabolism; fatty acid biosynthesis. Catalyzes the condensation reaction of fatty acid synthesis by the addition to an acyl acceptor of two carbons from malonyl-ACP. Catalyzes the first condensation reaction which initiates fatty acid synthesis and may therefore play a role in governing the total rate of fatty acid production. Possesses both acetoacetyl-ACP synthase and acetyl transacylase activities. Its substrate specificity determines the biosynthesis of branched-chain and/or straight-chain of fatty acids. The protein is Beta-ketoacyl-[acyl-carrier-protein] synthase III of Neorickettsia sennetsu (strain ATCC VR-367 / Miyayama) (Ehrlichia sennetsu).